We begin with the raw amino-acid sequence, 592 residues long: Aspartate--tRNA(Asp/Asn) ligase (592 aa).

Glu-177 is an L-aspartate binding site. Residues 201–204 (QLFK) form an aspartate region. Arg-223 is an L-aspartate binding site. ATP contacts are provided by residues 223 to 225 (RDE) and Gln-232. His-451 serves as a coordination point for L-aspartate. Residue Glu-485 coordinates ATP. Residue Arg-492 participates in L-aspartate binding. 537–540 (GLDR) contributes to the ATP binding site.

This sequence belongs to the class-II aminoacyl-tRNA synthetase family. Type 1 subfamily. Homodimer.

Its subcellular location is the cytoplasm. It carries out the reaction tRNA(Asx) + L-aspartate + ATP = L-aspartyl-tRNA(Asx) + AMP + diphosphate. Aspartyl-tRNA synthetase with relaxed tRNA specificity since it is able to aspartylate not only its cognate tRNA(Asp) but also tRNA(Asn). Reaction proceeds in two steps: L-aspartate is first activated by ATP to form Asp-AMP and then transferred to the acceptor end of tRNA(Asp/Asn). This is Aspartate--tRNA(Asp/Asn) ligase from Bacillus subtilis (strain 168).